Consider the following 245-residue polypeptide: Adapter protein MecA (245 aa).

Belongs to the MecA family. As to quaternary structure, homodimer.

In terms of biological role, enables the recognition and targeting of unfolded and aggregated proteins to the ClpC protease or to other proteins involved in proteolysis. This Streptococcus pneumoniae serotype 19F (strain G54) protein is Adapter protein MecA.